The chain runs to 397 residues: Phosphoglycerate kinase (397 aa).

Substrate contacts are provided by residues 25-27 (DLN), R41, 64-67 (HLGR), R118, and R151. ATP is bound by residues K202, E324, and 350–353 (GGDT).

It belongs to the phosphoglycerate kinase family. Monomer.

It localises to the cytoplasm. The enzyme catalyses (2R)-3-phosphoglycerate + ATP = (2R)-3-phospho-glyceroyl phosphate + ADP. It participates in carbohydrate degradation; glycolysis; pyruvate from D-glyceraldehyde 3-phosphate: step 2/5. The sequence is that of Phosphoglycerate kinase from Janthinobacterium sp. (strain Marseille) (Minibacterium massiliensis).